A 138-amino-acid chain; its full sequence is Small ribosomal subunit protein uS17 (138 aa).

2 stretches are compositionally biased toward basic and acidic residues: residues 1–18 (MSEE…RAEA) and 43–55 (AFDR…QKDT). Residues 1–62 (MSEEERNRGA…KDTRRGRRKE (62 aa)) are disordered.

The protein belongs to the universal ribosomal protein uS17 family. In terms of assembly, part of the 30S ribosomal subunit.

In terms of biological role, one of the primary rRNA binding proteins, it binds specifically to the 5'-end of 16S ribosomal RNA. This is Small ribosomal subunit protein uS17 from Rubrobacter xylanophilus (strain DSM 9941 / JCM 11954 / NBRC 16129 / PRD-1).